The sequence spans 53 residues: ATP synthase protein 8 (53 aa).

A helical membrane pass occupies residues 4-24 (MAPISWLLLFIIFSITFILFC).

The protein belongs to the ATPase protein 8 family. F-type ATPases have 2 components, CF(1) - the catalytic core - and CF(0) - the membrane proton channel.

Its subcellular location is the mitochondrion membrane. Its function is as follows. Mitochondrial membrane ATP synthase (F(1)F(0) ATP synthase or Complex V) produces ATP from ADP in the presence of a proton gradient across the membrane which is generated by electron transport complexes of the respiratory chain. F-type ATPases consist of two structural domains, F(1) - containing the extramembraneous catalytic core and F(0) - containing the membrane proton channel, linked together by a central stalk and a peripheral stalk. During catalysis, ATP synthesis in the catalytic domain of F(1) is coupled via a rotary mechanism of the central stalk subunits to proton translocation. Part of the complex F(0) domain. Minor subunit located with subunit a in the membrane. The sequence is that of ATP synthase protein 8 (mt:ATPase8) from Drosophila mauritiana (Fruit fly).